The sequence spans 193 residues: MIGRIAGTLLEKNPPRILVDCNGVGYEVDVPMSTFYNLPHTGEKVVLLTQLIVREDAHLLYGFLTPQERSTFRELLKITGVGARMALAVLSGMSVAELSQAVTLQDAARLTRVPGIGKKTAERLLLELKGKLGADLGPLAGAASPSDHAADILNALLALGYSEKEALAAIKNVPAGTGVSEGIKLSLKALSKA.

The interval M1–L64 is domain I. Residues T65–L139 form a domain II region. The tract at residues L139–A143 is flexible linker. The segment at S144 to A193 is domain III.

The protein belongs to the RuvA family. Homotetramer. Forms an RuvA(8)-RuvB(12)-Holliday junction (HJ) complex. HJ DNA is sandwiched between 2 RuvA tetramers; dsDNA enters through RuvA and exits via RuvB. An RuvB hexamer assembles on each DNA strand where it exits the tetramer. Each RuvB hexamer is contacted by two RuvA subunits (via domain III) on 2 adjacent RuvB subunits; this complex drives branch migration. In the full resolvosome a probable DNA-RuvA(4)-RuvB(12)-RuvC(2) complex forms which resolves the HJ.

The protein resides in the cytoplasm. In terms of biological role, the RuvA-RuvB-RuvC complex processes Holliday junction (HJ) DNA during genetic recombination and DNA repair, while the RuvA-RuvB complex plays an important role in the rescue of blocked DNA replication forks via replication fork reversal (RFR). RuvA specifically binds to HJ cruciform DNA, conferring on it an open structure. The RuvB hexamer acts as an ATP-dependent pump, pulling dsDNA into and through the RuvAB complex. HJ branch migration allows RuvC to scan DNA until it finds its consensus sequence, where it cleaves and resolves the cruciform DNA. This is Holliday junction branch migration complex subunit RuvA from Burkholderia thailandensis (strain ATCC 700388 / DSM 13276 / CCUG 48851 / CIP 106301 / E264).